The primary structure comprises 164 residues: FMN reductase (NADH) RutF (164 aa).

Belongs to the non-flavoprotein flavin reductase family. RutF subfamily.

The catalysed reaction is FMNH2 + NAD(+) = FMN + NADH + 2 H(+). In terms of biological role, catalyzes the reduction of FMN to FMNH2 which is used to reduce pyrimidine by RutA via the Rut pathway. This chain is FMN reductase (NADH) RutF, found in Klebsiella variicola (strain At-22).